The chain runs to 70 residues: MPKRKSATKGDEPARRSARLSARPVPKPAAKPKKAAAPKKAVKGKKAAENGDAKAEAKVQAAGDGAGNAK.

Residues 1-70 form a disordered region; it reads MPKRKSATKG…AAGDGAGNAK (70 aa). Residues 30–45 are compositionally biased toward basic residues; the sequence is AKPKKAAAPKKAVKGK. Positions 46–57 are enriched in basic and acidic residues; the sequence is KAAENGDAKAEA.

It belongs to the HMGN family.

The protein resides in the nucleus. It is found in the secreted. Non-histone protein that probably binds to the inner side of nucleosomal DNA, altering the association between the DNA and the nucleosome octamer. In terms of biological role, oncorhyncin III has antibacterial activity against Gram-positive and Gram-negative bacteria at submicromolar concentrations. The sequence is that of Non-histone chromosomal protein H6 from Oncorhynchus mykiss (Rainbow trout).